Reading from the N-terminus, the 294-residue chain is Phosphatidylserine decarboxylase proenzyme (294 aa).

Residues aspartate 113, histidine 169, and serine 256 each act as charge relay system; for autoendoproteolytic cleavage activity in the active site. The active-site Schiff-base intermediate with substrate; via pyruvic acid; for decarboxylase activity is serine 256. Pyruvic acid (Ser); by autocatalysis is present on serine 256.

It belongs to the phosphatidylserine decarboxylase family. PSD-B subfamily. Prokaryotic type II sub-subfamily. As to quaternary structure, heterodimer of a large membrane-associated beta subunit and a small pyruvoyl-containing alpha subunit. Pyruvate is required as a cofactor. Is synthesized initially as an inactive proenzyme. Formation of the active enzyme involves a self-maturation process in which the active site pyruvoyl group is generated from an internal serine residue via an autocatalytic post-translational modification. Two non-identical subunits are generated from the proenzyme in this reaction, and the pyruvate is formed at the N-terminus of the alpha chain, which is derived from the carboxyl end of the proenzyme. The autoendoproteolytic cleavage occurs by a canonical serine protease mechanism, in which the side chain hydroxyl group of the serine supplies its oxygen atom to form the C-terminus of the beta chain, while the remainder of the serine residue undergoes an oxidative deamination to produce ammonia and the pyruvoyl prosthetic group on the alpha chain. During this reaction, the Ser that is part of the protease active site of the proenzyme becomes the pyruvoyl prosthetic group, which constitutes an essential element of the active site of the mature decarboxylase.

The protein localises to the cell membrane. The catalysed reaction is a 1,2-diacyl-sn-glycero-3-phospho-L-serine + H(+) = a 1,2-diacyl-sn-glycero-3-phosphoethanolamine + CO2. The protein operates within phospholipid metabolism; phosphatidylethanolamine biosynthesis; phosphatidylethanolamine from CDP-diacylglycerol: step 2/2. Functionally, catalyzes the formation of phosphatidylethanolamine (PtdEtn) from phosphatidylserine (PtdSer). The protein is Phosphatidylserine decarboxylase proenzyme of Clostridium perfringens (strain ATCC 13124 / DSM 756 / JCM 1290 / NCIMB 6125 / NCTC 8237 / Type A).